Here is a 339-residue protein sequence, read N- to C-terminus: tRNA dimethylallyltransferase (339 aa).

Residue 33 to 40 (GPTASGKT) coordinates ATP. 35 to 40 (TASGKT) serves as a coordination point for substrate. Interaction with substrate tRNA regions lie at residues 58 to 61 (DSLL) and 182 to 186 (QRIQR).

Belongs to the IPP transferase family. As to quaternary structure, monomer. Mg(2+) serves as cofactor.

It carries out the reaction adenosine(37) in tRNA + dimethylallyl diphosphate = N(6)-dimethylallyladenosine(37) in tRNA + diphosphate. Its function is as follows. Catalyzes the transfer of a dimethylallyl group onto the adenine at position 37 in tRNAs that read codons beginning with uridine, leading to the formation of N6-(dimethylallyl)adenosine (i(6)A). This chain is tRNA dimethylallyltransferase, found in Acidithiobacillus ferrooxidans (strain ATCC 23270 / DSM 14882 / CIP 104768 / NCIMB 8455) (Ferrobacillus ferrooxidans (strain ATCC 23270)).